The primary structure comprises 246 residues: UDP-N-acetyl-D-mannosaminuronic acid transferase (246 aa).

The protein belongs to the glycosyltransferase 26 family.

The enzyme catalyses UDP-N-acetyl-alpha-D-mannosaminouronate + N-acetyl-alpha-D-glucosaminyl-di-trans,octa-cis-undecaprenyl diphosphate = beta-D-ManNAcA-(1-&gt;4)-alpha-D-GlcNAc-di-trans,octa-cis-undecaprenyl diphosphate + UDP + H(+). Its pathway is bacterial outer membrane biogenesis; enterobacterial common antigen biosynthesis. In terms of biological role, catalyzes the synthesis of Und-PP-GlcNAc-ManNAcA (Lipid II), the second lipid-linked intermediate involved in enterobacterial common antigen (ECA) synthesis. The polypeptide is UDP-N-acetyl-D-mannosaminuronic acid transferase (Salmonella dublin (strain CT_02021853)).